A 360-amino-acid chain; its full sequence is uncharacterized protein (360 aa).

This sequence to P.multocida PM1082.

This is an uncharacterized protein from Pasteurella multocida (strain Pm70).